The chain runs to 208 residues: Small ribosomal subunit protein uS4 (208 aa).

In terms of domain architecture, S4 RNA-binding spans 98-161 (RRLDNVIYRL…KESPRIKELL (64 aa)).

It belongs to the universal ribosomal protein uS4 family. In terms of assembly, part of the 30S ribosomal subunit. Contacts protein S5. The interaction surface between S4 and S5 is involved in control of translational fidelity.

In terms of biological role, one of the primary rRNA binding proteins, it binds directly to 16S rRNA where it nucleates assembly of the body of the 30S subunit. Functionally, with S5 and S12 plays an important role in translational accuracy. This chain is Small ribosomal subunit protein uS4, found in Pelotomaculum thermopropionicum (strain DSM 13744 / JCM 10971 / SI).